We begin with the raw amino-acid sequence, 893 residues long: Valine--tRNA ligase (893 aa).

The 'HIGH' region motif lies at 57–67 (PNVTGTLHMGH). Residues 545-549 (KMSKS) carry the 'KMSKS' region motif. ATP is bound at residue lysine 548. Positions 821–855 (TSGSVDLEAERKRLEKDLAAAQKELATTEGKLGNE) form a coiled coil.

Belongs to the class-I aminoacyl-tRNA synthetase family. ValS type 1 subfamily. Monomer.

It is found in the cytoplasm. It catalyses the reaction tRNA(Val) + L-valine + ATP = L-valyl-tRNA(Val) + AMP + diphosphate. Functionally, catalyzes the attachment of valine to tRNA(Val). As ValRS can inadvertently accommodate and process structurally similar amino acids such as threonine, to avoid such errors, it has a 'posttransfer' editing activity that hydrolyzes mischarged Thr-tRNA(Val) in a tRNA-dependent manner. In Nocardia farcinica (strain IFM 10152), this protein is Valine--tRNA ligase.